Consider the following 327-residue polypeptide: UPF0665 family protein C23C4.06c (327 aa).

This sequence belongs to the UPF0665 family.

It is found in the cytoplasm. Its subcellular location is the nucleus. The protein is UPF0665 family protein C23C4.06c of Schizosaccharomyces pombe (strain 972 / ATCC 24843) (Fission yeast).